A 217-amino-acid chain; its full sequence is MPSLPVPQWIVSPGLTDYAAALADMESRAAAIHADEAGERIWLLEHPPLYTAGTSADPAELLDPRFPVYDAGRGGRYTYHGPGQRVGYVQLDLTRRGRDVRAYVHALEGWVIDALALLGVKARRAEGRIGIWTDDVRGREAKIGAIGVRVKRWVTLHGFSLNVAPDLTHFTGIVPCGIAEYPVTSLAALGKATGFSEVDAALARTLPAFLDKLRPSD.

The 180-residue stretch at 35-214 folds into the BPL/LPL catalytic domain; it reads DEAGERIWLL…TLPAFLDKLR (180 aa). Substrate is bound by residues 73–80, 145–147, and 158–160; these read RGGRYTYH, AIG, and GFS. Cysteine 176 serves as the catalytic Acyl-thioester intermediate.

The protein belongs to the LipB family.

Its subcellular location is the cytoplasm. The catalysed reaction is octanoyl-[ACP] + L-lysyl-[protein] = N(6)-octanoyl-L-lysyl-[protein] + holo-[ACP] + H(+). Its pathway is protein modification; protein lipoylation via endogenous pathway; protein N(6)-(lipoyl)lysine from octanoyl-[acyl-carrier-protein]: step 1/2. In terms of biological role, catalyzes the transfer of endogenously produced octanoic acid from octanoyl-acyl-carrier-protein onto the lipoyl domains of lipoate-dependent enzymes. Lipoyl-ACP can also act as a substrate although octanoyl-ACP is likely to be the physiological substrate. In Sphingopyxis alaskensis (strain DSM 13593 / LMG 18877 / RB2256) (Sphingomonas alaskensis), this protein is Octanoyltransferase.